The following is a 219-amino-acid chain: Imidazole glycerol phosphate synthase subunit HisH (219 aa).

The Glutamine amidotransferase type-1 domain maps to 4–216; it reads TVTVLDYGSG…VDSLPATGRN (213 aa). The Nucleophile role is filled by Cys-82. Catalysis depends on residues His-191 and Glu-193.

Heterodimer of HisH and HisF.

It localises to the cytoplasm. The enzyme catalyses 5-[(5-phospho-1-deoxy-D-ribulos-1-ylimino)methylamino]-1-(5-phospho-beta-D-ribosyl)imidazole-4-carboxamide + L-glutamine = D-erythro-1-(imidazol-4-yl)glycerol 3-phosphate + 5-amino-1-(5-phospho-beta-D-ribosyl)imidazole-4-carboxamide + L-glutamate + H(+). It catalyses the reaction L-glutamine + H2O = L-glutamate + NH4(+). It functions in the pathway amino-acid biosynthesis; L-histidine biosynthesis; L-histidine from 5-phospho-alpha-D-ribose 1-diphosphate: step 5/9. Functionally, IGPS catalyzes the conversion of PRFAR and glutamine to IGP, AICAR and glutamate. The HisH subunit catalyzes the hydrolysis of glutamine to glutamate and ammonia as part of the synthesis of IGP and AICAR. The resulting ammonia molecule is channeled to the active site of HisF. The polypeptide is Imidazole glycerol phosphate synthase subunit HisH (Renibacterium salmoninarum (strain ATCC 33209 / DSM 20767 / JCM 11484 / NBRC 15589 / NCIMB 2235)).